Consider the following 466-residue polypeptide: Transcription factor SOX-10 (466 aa).

Residues 1-67 form a disordered region; that stretch reads MAEEQDLSEV…QQDGEADDDK (67 aa). Low complexity predominate over residues 23–32; it reads LSPGSAPSLG. Position 24 is a phosphoserine (serine 24). The interval 62–102 is dimerization (DIM); it reads EADDDKFPVCIREAVSQVLSGYDWTLVPMPVRVNGASKSKP. Residues 104-172 constitute a DNA-binding region (HMG box); it reads VKRPMNAFMV…QHKKDHPDYK (69 aa). A Nuclear export signal motif is present at residues 134–145; that stretch reads LSKTLGKLWRLL. Composition is skewed to basic and acidic residues over residues 160-173 and 254-271; these read LRMQ…DYKY and ADPK…KPHI. 4 disordered regions span residues 160–199, 212–274, 354–375, and 433–466; these read LRMQ…EQGG, LDHR…IDFG, AQVK…QPST, and RPLY…LSRP. The interval 228–310 is transactivation domain (TAM); that stretch reads PEHPSGQSHG…LPPNGHPGHV (83 aa). Residues 353–466 form a transactivation domain (TAC) region; it reads KAQVKTETAG…QPVYTTLSRP (114 aa). Polar residues predominate over residues 440 to 466; that stretch reads SDPSPSGPQSHSPTHWEQPVYTTLSRP.

Monomer. Interacts with ARMCX3 at the mitochondrial outer membrane surface. Interacts with PAX3. In terms of tissue distribution, expressed in fetal brain and in adult brain, heart, small intestine and colon.

The protein localises to the cytoplasm. It is found in the nucleus. The protein resides in the mitochondrion outer membrane. Transcription factor that plays a central role in developing and mature glia. Specifically activates expression of myelin genes, during oligodendrocyte (OL) maturation, such as DUSP15 and MYRF, thereby playing a central role in oligodendrocyte maturation and CNS myelination. Once induced, MYRF cooperates with SOX10 to implement the myelination program. Transcriptional activator of MITF, acting synergistically with PAX3. Transcriptional activator of MBP, via binding to the gene promoter. In Homo sapiens (Human), this protein is Transcription factor SOX-10 (SOX10).